The sequence spans 63 residues: ATP synthase F(0) complex subunit 8 (63 aa).

The chain crosses the membrane as a helical span at residues 8–24 (MWLLTILSMLLTLFVLF). Residue lysine 57 is modified to N6-acetyllysine.

It belongs to the ATPase protein 8 family. Component of the ATP synthase complex composed at least of ATP5F1A/subunit alpha, ATP5F1B/subunit beta, ATP5MC1/subunit c (homooctomer), MT-ATP6/subunit a, MT-ATP8/subunit 8, ATP5ME/subunit e, ATP5MF/subunit f, ATP5MG/subunit g, ATP5MK/subunit k, ATP5MJ/subunit j, ATP5F1C/subunit gamma, ATP5F1D/subunit delta, ATP5F1E/subunit epsilon, ATP5PF/subunit F6, ATP5PB/subunit b, ATP5PD/subunit d, ATP5PO/subunit OSCP. ATP synthase complex consists of a soluble F(1) head domain (subunits alpha(3) and beta(3)) - the catalytic core - and a membrane F(0) domain - the membrane proton channel (subunits c, a, 8, e, f, g, k and j). These two domains are linked by a central stalk (subunits gamma, delta, and epsilon) rotating inside the F1 region and a stationary peripheral stalk (subunits F6, b, d, and OSCP). Interacts with PRICKLE3.

Its subcellular location is the mitochondrion membrane. In terms of biological role, subunit 8, of the mitochondrial membrane ATP synthase complex (F(1)F(0) ATP synthase or Complex V) that produces ATP from ADP in the presence of a proton gradient across the membrane which is generated by electron transport complexes of the respiratory chain. ATP synthase complex consist of a soluble F(1) head domain - the catalytic core - and a membrane F(1) domain - the membrane proton channel. These two domains are linked by a central stalk rotating inside the F(1) region and a stationary peripheral stalk. During catalysis, ATP synthesis in the catalytic domain of F(1) is coupled via a rotary mechanism of the central stalk subunits to proton translocation. In vivo, can only synthesize ATP although its ATP hydrolase activity can be activated artificially in vitro. Part of the complex F(0) domain. The chain is ATP synthase F(0) complex subunit 8 from Balaenoptera physalus (Fin whale).